Reading from the N-terminus, the 557-residue chain is IgE-binding protein (557 aa).

Residues 113–172 (DGLGKPALSSSEAGEESSSEETDWEEEAAHYQPANWSRKKPKAAGEGQFADWPQGSRLQG) are disordered. A compositionally biased stretch (acidic residues) spans 125 to 138 (AGEESSSEETDWEE). One can recognise an Integrase catalytic domain in the interval 344–534 (TAIRPGRRSR…TAAERHVQSQ (191 aa)).

This chain is IgE-binding protein (Iap), found in Mus musculus (Mouse).